Consider the following 506-residue polypeptide: Galactose/methyl galactoside import ATP-binding protein MglA (506 aa).

2 consecutive ABC transporter domains span residues 14–249 (LEMS…VGRS) and 264–506 (VILE…SLHL). 46-53 (GENGAGKS) lines the ATP pocket.

The protein belongs to the ABC transporter superfamily. Galactose/methyl galactoside importer (TC 3.A.1.2.3) family. In terms of assembly, the complex is composed of one ATP-binding protein (MglA), two transmembrane proteins (MglC) and a solute-binding protein (MglB).

It localises to the cell inner membrane. The enzyme catalyses D-galactose(out) + ATP + H2O = D-galactose(in) + ADP + phosphate + H(+). It carries out the reaction methyl beta-D-galactoside(out) + ATP + H2O = methyl beta-D-galactoside(in) + ADP + phosphate + H(+). Its function is as follows. Part of the ABC transporter complex MglABC involved in galactose/methyl galactoside import. Responsible for energy coupling to the transport system. In Escherichia coli O6:K15:H31 (strain 536 / UPEC), this protein is Galactose/methyl galactoside import ATP-binding protein MglA.